The primary structure comprises 154 residues: Ubiquitin-like protein 4A-A (154 aa).

A Ubiquitin-like domain is found at 1–76 (MILTVKPLQG…LNLVVRPAGE (76 aa)).

As to quaternary structure, component of the BAT3 complex.

It localises to the cytoplasm. It is found in the cytosol. Component of the BAT3 complex, a multiprotein complex involved in the post-translational delivery of tail-anchored (TA) membrane proteins to the endoplasmic reticulum membrane. TA membrane proteins, also named type II transmembrane proteins, contain a single C-terminal transmembrane region. The sequence is that of Ubiquitin-like protein 4A-A (ubl4aa) from Salmo salar (Atlantic salmon).